The chain runs to 530 residues: MAPGKLASAVLLLLLCCAGSGFCGKVLVWPCEMSHWLNLKTLLEELVKRGHEVTVLTLSNNLFIDYNRHPAFNFEVIPVPTDKNMSENILNEFIELAVNVMPTMPLWQSGKLLQQFFVQITEDLGLNCRNTVYNQSLMKKLRDSKYDVLVTDPVIPCGELVAEMLGVPFVNMLKFSMGHTIEKYCGQLPAPPSYVPVPLGGLTTRMTFMERVKNMVFSVLFDFWIQQYDYKFWDQFYSEALGRPTTLCEIMGKAEIWLIRTYWDFEFPRPYLPNFEFVGGLHCKPAKPLPKEMEEFVQSSGEDGVVVFSLGSMVKNLTEEKANLIASALAQIPQKVLWRYKGKKPATLGPNTRLFDWIPQNDLLGHPKTKAFITHGGSNGIYEAIYHGVPMVGMPIFSDQPDNLAGMKAKGAAVEVNMNTMTSADLLGALRTVINDPTYKENAMKLSRIHHDQPVKPLDRAAFWVEFVMHHKGAKHLRVAAHDLSWFQYHSLDVIGFLLACVASAILLVTKCCLFSFQNFIKIGKRIKKE.

Positions 1 to 23 (MAPGKLASAVLLLLLCCAGSGFC) are cleaved as a signal peptide. The Extracellular segment spans residues 24-494 (GKVLVWPCEM…SWFQYHSLDV (471 aa)). The N-linked (GlcNAc...) asparagine glycan is linked to asparagine 316. A helical membrane pass occupies residues 495–515 (IGFLLACVASAILLVTKCCLF). Residues 516–530 (SFQNFIKIGKRIKKE) are Cytoplasmic-facing.

This sequence belongs to the UDP-glycosyltransferase family. In terms of tissue distribution, specifically expressed in liver and small intestine.

It is found in the membrane. It carries out the reaction glucuronate acceptor + UDP-alpha-D-glucuronate = acceptor beta-D-glucuronoside + UDP + H(+). Functionally, UDP-glucuronosyltransferases catalyze phase II biotransformation reactions in which lipophilic substrates are conjugated with glucuronic acid to increase water solubility and enhance excretion. They are of major importance in the conjugation and subsequent elimination of potentially toxic xenobiotics and endogenous compounds. The protein is UDP-glucuronosyltransferase 2A3 (UGT2A3) of Cavia porcellus (Guinea pig).